A 312-amino-acid chain; its full sequence is Dihydroorotate dehydrogenase B (NAD(+)), catalytic subunit (312 aa).

FMN-binding positions include S23 and 47–48; that span reads KA. Substrate contacts are provided by residues K47 and 71–75; that span reads NAIGL. N102 and N130 together coordinate FMN. A substrate-binding site is contributed by N130. C133 (nucleophile) is an active-site residue. K168 and I194 together coordinate FMN. A substrate-binding site is contributed by 195-196; sequence NT. FMN-binding positions include G220, 246-247, and 268-269; these read GG and GT.

The protein belongs to the dihydroorotate dehydrogenase family. Type 1 subfamily. As to quaternary structure, heterotetramer of 2 PyrK and 2 PyrD type B subunits. The cofactor is FMN.

Its subcellular location is the cytoplasm. The enzyme catalyses (S)-dihydroorotate + NAD(+) = orotate + NADH + H(+). The protein operates within pyrimidine metabolism; UMP biosynthesis via de novo pathway; orotate from (S)-dihydroorotate (NAD(+) route): step 1/1. In terms of biological role, catalyzes the conversion of dihydroorotate to orotate with NAD(+) as electron acceptor. In Enterococcus faecalis (strain ATCC 700802 / V583), this protein is Dihydroorotate dehydrogenase B (NAD(+)), catalytic subunit (pyrDB).